We begin with the raw amino-acid sequence, 443 residues long: uncharacterized protein (443 aa).

This is an uncharacterized protein from Saccharomyces cerevisiae (strain ATCC 204508 / S288c) (Baker's yeast).